A 187-amino-acid polypeptide reads, in one-letter code: ATP-dependent protease subunit HslV (187 aa).

Thr-7 is a catalytic residue. Na(+) contacts are provided by Ala-162, Cys-165, and Thr-168.

Belongs to the peptidase T1B family. HslV subfamily. In terms of assembly, a double ring-shaped homohexamer of HslV is capped on each side by a ring-shaped HslU homohexamer. The assembly of the HslU/HslV complex is dependent on binding of ATP.

The protein localises to the cytoplasm. The enzyme catalyses ATP-dependent cleavage of peptide bonds with broad specificity.. Allosterically activated by HslU binding. Protease subunit of a proteasome-like degradation complex believed to be a general protein degrading machinery. In Methylococcus capsulatus (strain ATCC 33009 / NCIMB 11132 / Bath), this protein is ATP-dependent protease subunit HslV.